Consider the following 352-residue polypeptide: Chorismate synthase (352 aa).

Residue Arg48 coordinates NADP(+). FMN contacts are provided by residues 125–127, 238–239, Gly278, 293–297, and Arg319; these read RSS, NA, and KPTSS.

The protein belongs to the chorismate synthase family. Homotetramer. Requires FMNH2 as cofactor.

It catalyses the reaction 5-O-(1-carboxyvinyl)-3-phosphoshikimate = chorismate + phosphate. It functions in the pathway metabolic intermediate biosynthesis; chorismate biosynthesis; chorismate from D-erythrose 4-phosphate and phosphoenolpyruvate: step 7/7. In terms of biological role, catalyzes the anti-1,4-elimination of the C-3 phosphate and the C-6 proR hydrogen from 5-enolpyruvylshikimate-3-phosphate (EPSP) to yield chorismate, which is the branch point compound that serves as the starting substrate for the three terminal pathways of aromatic amino acid biosynthesis. This reaction introduces a second double bond into the aromatic ring system. The sequence is that of Chorismate synthase from Legionella pneumophila (strain Lens).